The sequence spans 259 residues: Proteasome subunit alpha (259 aa).

This sequence belongs to the peptidase T1A family. As to quaternary structure, the 20S proteasome core is composed of 14 alpha and 14 beta subunits that assemble into four stacked heptameric rings, resulting in a barrel-shaped structure. The two inner rings, each composed of seven catalytic beta subunits, are sandwiched by two outer rings, each composed of seven alpha subunits. The catalytic chamber with the active sites is on the inside of the barrel. Has a gated structure, the ends of the cylinder being occluded by the N-termini of the alpha-subunits. Is capped at one or both ends by the proteasome regulatory ATPase, PAN.

The protein resides in the cytoplasm. The formation of the proteasomal ATPase PAN-20S proteasome complex, via the docking of the C-termini of PAN into the intersubunit pockets in the alpha-rings, triggers opening of the gate for substrate entry. Interconversion between the open-gate and close-gate conformations leads to a dynamic regulation of the 20S proteasome proteolysis activity. In terms of biological role, component of the proteasome core, a large protease complex with broad specificity involved in protein degradation. This is Proteasome subunit alpha from Methanococcus maripaludis (strain C7 / ATCC BAA-1331).